Here is a 311-residue protein sequence, read N- to C-terminus: Heparan sulfate glucosamine 3-O-sulfotransferase 1 (311 aa).

Residues 1–20 (MTLLLLGAVLLVAQPQLVHS) form the signal peptide. An N-linked (GlcNAc...) asparagine glycan is attached at asparagine 52. 3'-phosphoadenylyl sulfate contacts are provided by residues 68-72 (KGGTR), arginine 151, and serine 159. Asparagine 196, asparagine 246, and asparagine 253 each carry an N-linked (GlcNAc...) asparagine glycan. Residue tyrosine 259 coordinates 3'-phosphoadenylyl sulfate. Cysteine 260 and cysteine 269 form a disulfide bridge. 274 to 278 (KGRAH) is a binding site for 3'-phosphoadenylyl sulfate.

The protein belongs to the sulfotransferase 1 family.

It is found in the golgi apparatus lumen. The catalysed reaction is alpha-D-glucosaminyl-[heparan sulfate](n) + 3'-phosphoadenylyl sulfate = 3-sulfo-alpha-D-glucosaminyl-[heparan sulfate](n) + adenosine 3',5'-bisphosphate + H(+). Functionally, sulfotransferase that utilizes 3'-phospho-5'-adenylyl sulfate (PAPS) to catalyze the transfer of a sulfo group to position 3 of glucosamine residues in heparan. Catalyzes the rate limiting step in the biosynthesis of heparan sulfate (HSact). This modification is a crucial step in the biosynthesis of anticoagulant heparan sulfate as it completes the structure of the antithrombin pentasaccharide binding site. The polypeptide is Heparan sulfate glucosamine 3-O-sulfotransferase 1 (Hs3st1) (Mus musculus (Mouse)).